The chain runs to 224 residues: Cytidylate kinase (224 aa).

10-18 (GPASAGKST) provides a ligand contact to ATP.

The protein belongs to the cytidylate kinase family. Type 1 subfamily.

It localises to the cytoplasm. The catalysed reaction is CMP + ATP = CDP + ADP. It carries out the reaction dCMP + ATP = dCDP + ADP. In Leuconostoc mesenteroides subsp. mesenteroides (strain ATCC 8293 / DSM 20343 / BCRC 11652 / CCM 1803 / JCM 6124 / NCDO 523 / NBRC 100496 / NCIMB 8023 / NCTC 12954 / NRRL B-1118 / 37Y), this protein is Cytidylate kinase.